The primary structure comprises 307 residues: Putative ankyrin repeat protein L59 (307 aa).

ANK repeat units follow at residues 41-67, 68-97, 98-127, 129-157, 158-187, 188-217, 219-247, 248-277, and 279-307; these read LFNK…NLEK, IDNK…DTTN, HNYS…DIRA, DDEA…DVRN, RNDF…DIRT, DDDY…NIHA, GDSA…DIRI, DNDY…DIGA, and NNYA…LKLY.

In Acanthamoeba polyphaga (Amoeba), this protein is Putative ankyrin repeat protein L59.